The chain runs to 348 residues: Nicotinate-nucleotide--dimethylbenzimidazole phosphoribosyltransferase (348 aa).

Glu-317 acts as the Proton acceptor in catalysis.

Belongs to the CobT family.

It carries out the reaction 5,6-dimethylbenzimidazole + nicotinate beta-D-ribonucleotide = alpha-ribazole 5'-phosphate + nicotinate + H(+). Its pathway is nucleoside biosynthesis; alpha-ribazole biosynthesis; alpha-ribazole from 5,6-dimethylbenzimidazole: step 1/2. In terms of biological role, catalyzes the synthesis of alpha-ribazole-5'-phosphate from nicotinate mononucleotide (NAMN) and 5,6-dimethylbenzimidazole (DMB). The chain is Nicotinate-nucleotide--dimethylbenzimidazole phosphoribosyltransferase from Clostridioides difficile (strain 630) (Peptoclostridium difficile).